A 503-amino-acid chain; its full sequence is Glutamyl-tRNA(Gln) amidotransferase subunit A (503 aa).

Residues Lys-79 and Ser-154 each act as charge relay system in the active site. Catalysis depends on Ser-178, which acts as the Acyl-ester intermediate.

Belongs to the amidase family. GatA subfamily. As to quaternary structure, heterotrimer of A, B and C subunits.

The enzyme catalyses L-glutamyl-tRNA(Gln) + L-glutamine + ATP + H2O = L-glutaminyl-tRNA(Gln) + L-glutamate + ADP + phosphate + H(+). Functionally, allows the formation of correctly charged Gln-tRNA(Gln) through the transamidation of misacylated Glu-tRNA(Gln) in organisms which lack glutaminyl-tRNA synthetase. The reaction takes place in the presence of glutamine and ATP through an activated gamma-phospho-Glu-tRNA(Gln). In Agathobacter rectalis (strain ATCC 33656 / DSM 3377 / JCM 17463 / KCTC 5835 / VPI 0990) (Eubacterium rectale), this protein is Glutamyl-tRNA(Gln) amidotransferase subunit A.